An 813-amino-acid chain; its full sequence is Leucine--tRNA ligase (813 aa).

A 'HIGH' region motif is present at residues 42–52 (PYTSGNLHIGH). Residues 580-584 (KMSKS) carry the 'KMSKS' region motif. Lys-583 provides a ligand contact to ATP.

The protein belongs to the class-I aminoacyl-tRNA synthetase family.

It is found in the cytoplasm. The enzyme catalyses tRNA(Leu) + L-leucine + ATP = L-leucyl-tRNA(Leu) + AMP + diphosphate. This Dehalococcoides mccartyi (strain ATCC BAA-2266 / KCTC 15142 / 195) (Dehalococcoides ethenogenes (strain 195)) protein is Leucine--tRNA ligase.